The primary structure comprises 156 residues: Protein L* (156 aa).

Its function is as follows. May be required for viral persistance in the host. This chain is Protein L*, found in Theiler's murine encephalomyelitis virus (strain DA) (TMEV).